The primary structure comprises 132 residues: D-ribose pyranase (132 aa).

H20 acts as the Proton donor in catalysis. Substrate contacts are provided by residues D28, H99, and 121-123; that span reads YAN.

Belongs to the RbsD / FucU family. RbsD subfamily. Homodecamer.

The protein localises to the cytoplasm. The catalysed reaction is beta-D-ribopyranose = beta-D-ribofuranose. It functions in the pathway carbohydrate metabolism; D-ribose degradation; D-ribose 5-phosphate from beta-D-ribopyranose: step 1/2. In terms of biological role, catalyzes the interconversion of beta-pyran and beta-furan forms of D-ribose. This is D-ribose pyranase from Variovorax paradoxus (strain S110).